A 486-amino-acid polypeptide reads, in one-letter code: Cardiolipin synthase A (486 aa).

A run of 2 helical transmembrane segments spans residues 3-23 (TFYT…IAGV) and 38-58 (MAWL…YLSF). 2 consecutive PLD phosphodiesterase domains span residues 219–246 (MDLR…VDPR) and 399–426 (KDGL…DMRS). Catalysis depends on residues His224, Lys226, Asp231, His404, Lys406, and Asp411.

The protein belongs to the phospholipase D family. Cardiolipin synthase subfamily. ClsA sub-subfamily.

It localises to the cell inner membrane. It carries out the reaction 2 a 1,2-diacyl-sn-glycero-3-phospho-(1'-sn-glycerol) = a cardiolipin + glycerol. Functionally, catalyzes the reversible phosphatidyl group transfer from one phosphatidylglycerol molecule to another to form cardiolipin (CL) (diphosphatidylglycerol) and glycerol. This is Cardiolipin synthase A from Pectobacterium atrosepticum (strain SCRI 1043 / ATCC BAA-672) (Erwinia carotovora subsp. atroseptica).